Here is a 90-residue protein sequence, read N- to C-terminus: MKEIIIWSAYLDAEKSRKEGRKIPKELCVNNPKIKDIYNSLRKLGYNAEIVKNKCHPKEWWEIVGYIKVKVNDDIPKLEILKKICENLKK.

It belongs to the SRP19 family. In terms of assembly, part of the signal recognition particle protein translocation system, which is composed of SRP and FtsY. Archaeal SRP consists of a 7S RNA molecule of 300 nucleotides and two protein subunits: SRP54 and SRP19.

Its subcellular location is the cytoplasm. Its function is as follows. Involved in targeting and insertion of nascent membrane proteins into the cytoplasmic membrane. Binds directly to 7S RNA and mediates binding of the 54 kDa subunit of the SRP. This chain is Signal recognition particle 19 kDa protein, found in Methanococcus aeolicus (strain ATCC BAA-1280 / DSM 17508 / OCM 812 / Nankai-3).